The primary structure comprises 358 residues: MTARLRPELADIPAYTPGKTVPGAIKIASNETVHGPLPSVRAAIEKATDQLNRYPDNGYLELREHLASHLDKNLGAGAFTPEQIAVGCGSVSLCQQLIQITSSVGDEVIFAWRSFEIYPLQVRTAGATPVQVPLRDHTHDLDAMLAAITDRTRLIFVCNPNNPTSTVVDPAALKRFVEAVPPHILVVIDEAYVEYIRGDQVPGSFGLVRAHPNVVVLRTFSKAYGLAGLRIGYAVADADIVTALGKVYVPFSATSISQAAAIASIDAADELLARTDQVVAERDRVTAALREAGFTLPPSQSNFVWLPLAERTLDFVRRAAENRLVVRPYGEDGVRVTIAAPHENDAFLEFARNWIGQP.

Lys-222 bears the N6-(pyridoxal phosphate)lysine mark.

Belongs to the class-II pyridoxal-phosphate-dependent aminotransferase family. In terms of assembly, homodimer. Requires pyridoxal 5'-phosphate as cofactor.

It catalyses the reaction an aromatic L-alpha-amino acid + 2-oxoglutarate = an aromatic oxo-acid + L-glutamate. Aminotransferase that catalyzes the conversion of aromatic amino acids and 2-oxoglutarate into corresponding aromatic oxo acids and L-glutamate. The chain is Aromatic amino acid aminotransferase from Mycobacterium sp. (strain JLS).